A 374-amino-acid chain; its full sequence is Protein dip1 (374 aa).

It belongs to the LDB17 family.

The protein localises to the cytoplasm. The protein resides in the nucleus. It is found in the cell tip. In terms of biological role, may be involved in protein-linked oligosaccharide phosphorylation. This chain is Protein dip1 (dip1), found in Schizosaccharomyces pombe (strain 972 / ATCC 24843) (Fission yeast).